Here is a 46-residue protein sequence, read N- to C-terminus: uncharacterized protein (46 aa).

This is an uncharacterized protein from Acidianus sp. F28 (AFV-2).